The following is a 147-amino-acid chain: Large ribosomal subunit protein uL15 (147 aa).

The interval 1 to 62 (MDLNTLKPAL…GQMPLQRRLP (62 aa)) is disordered. Basic residues predominate over residues 30–39 (TATKGHKGQK).

Belongs to the universal ribosomal protein uL15 family. Part of the 50S ribosomal subunit.

Its function is as follows. Binds to the 23S rRNA. In Pelobacter propionicus (strain DSM 2379 / NBRC 103807 / OttBd1), this protein is Large ribosomal subunit protein uL15.